Here is a 156-residue protein sequence, read N- to C-terminus: MSTNDHVLSLLQSLETREQLQKQLQIRSHEAFSLLLKNKSDFSVASLLSNQNSPTFKKPRISIAWVDPMFGKQQKRAVNLGTGDEEYQHLMFENAIFQKEPIPEGLIKSDSVCFHDTDVGFTNVLEQCLKLCQVNQKIVFLMQLIRNEQEKQREQF.

This is an uncharacterized protein from Schizosaccharomyces pombe (strain 972 / ATCC 24843) (Fission yeast).